We begin with the raw amino-acid sequence, 186 residues long: MISSNDFRTGTTIEIDGQVWRVVEFLHVKPGKGSAFVRTKLKSVRNGNVVEKTFRAGESVQQAVLEKSNLQHTYVESGDYVFMDMISFEETRLSSDQIGRGSKYLKEGMEVNVIFYKDKVLEVELPISITLKVTETDPGVKGDTASGGTKPAILETGAQVMVPLFISVGEMIKVDTRNDSYLGRDN.

Belongs to the elongation factor P family.

The protein localises to the cytoplasm. The protein operates within protein biosynthesis; polypeptide chain elongation. In terms of biological role, involved in peptide bond synthesis. Stimulates efficient translation and peptide-bond synthesis on native or reconstituted 70S ribosomes in vitro. Probably functions indirectly by altering the affinity of the ribosome for aminoacyl-tRNA, thus increasing their reactivity as acceptors for peptidyl transferase. In Prochlorococcus marinus subsp. pastoris (strain CCMP1986 / NIES-2087 / MED4), this protein is Elongation factor P.